Reading from the N-terminus, the 204-residue chain is MSKVVVLNDKLEKAGELDLPSKYAEVNPHNLYLYVKSYLASLRANTAHTKGRSDVSGGGKKPWRQKGRGGARAGSTRTNVWVGGAVAFGPTNERNYFQKVNKKQKRLALERALADKAAKGVLFTADSLAIESGKTKDANAVIKKLGVKDALIVKDLLDEKTLLAYRNLANCYVVDVTEVNAYLVSVFNAVIMEKSALESITKEG.

A disordered region spans residues threonine 49–serine 75.

The protein belongs to the universal ribosomal protein uL4 family. In terms of assembly, part of the 50S ribosomal subunit.

Its function is as follows. One of the primary rRNA binding proteins, this protein initially binds near the 5'-end of the 23S rRNA. It is important during the early stages of 50S assembly. It makes multiple contacts with different domains of the 23S rRNA in the assembled 50S subunit and ribosome. In terms of biological role, forms part of the polypeptide exit tunnel. The polypeptide is Large ribosomal subunit protein uL4 (Campylobacter jejuni (strain RM1221)).